Reading from the N-terminus, the 314-residue chain is Methionyl-tRNA formyltransferase (314 aa).

113–116 contacts (6S)-5,6,7,8-tetrahydrofolate; the sequence is SILP.

The protein belongs to the Fmt family.

The enzyme catalyses L-methionyl-tRNA(fMet) + (6R)-10-formyltetrahydrofolate = N-formyl-L-methionyl-tRNA(fMet) + (6S)-5,6,7,8-tetrahydrofolate + H(+). Attaches a formyl group to the free amino group of methionyl-tRNA(fMet). The formyl group appears to play a dual role in the initiator identity of N-formylmethionyl-tRNA by promoting its recognition by IF2 and preventing the misappropriation of this tRNA by the elongation apparatus. The protein is Methionyl-tRNA formyltransferase of Photobacterium profundum (strain SS9).